The following is a 398-amino-acid chain: Acetate kinase (398 aa).

Asn-10 provides a ligand contact to Mg(2+). Lys-17 contributes to the ATP binding site. Arg-91 contributes to the substrate binding site. Asp-148 acts as the Proton donor/acceptor in catalysis. ATP is bound by residues 208–212 (HLGNG), 283–285 (DCR), and 331–335 (GIGEN). Glu-385 provides a ligand contact to Mg(2+).

It belongs to the acetokinase family. Homodimer. Mg(2+) is required as a cofactor. Requires Mn(2+) as cofactor.

It localises to the cytoplasm. It carries out the reaction acetate + ATP = acetyl phosphate + ADP. It participates in metabolic intermediate biosynthesis; acetyl-CoA biosynthesis; acetyl-CoA from acetate: step 1/2. In terms of biological role, catalyzes the formation of acetyl phosphate from acetate and ATP. Can also catalyze the reverse reaction. In Shewanella pealeana (strain ATCC 700345 / ANG-SQ1), this protein is Acetate kinase.